The following is a 214-amino-acid chain: Probable transaldolase (214 aa).

The Schiff-base intermediate with substrate role is filled by lysine 83.

This sequence belongs to the transaldolase family. Type 3B subfamily.

Its subcellular location is the cytoplasm. The enzyme catalyses D-sedoheptulose 7-phosphate + D-glyceraldehyde 3-phosphate = D-erythrose 4-phosphate + beta-D-fructose 6-phosphate. It functions in the pathway carbohydrate degradation; pentose phosphate pathway; D-glyceraldehyde 3-phosphate and beta-D-fructose 6-phosphate from D-ribose 5-phosphate and D-xylulose 5-phosphate (non-oxidative stage): step 2/3. Transaldolase is important for the balance of metabolites in the pentose-phosphate pathway. This chain is Probable transaldolase, found in Leptospira interrogans serogroup Icterohaemorrhagiae serovar copenhageni (strain Fiocruz L1-130).